The following is a 485-amino-acid chain: Glutamyl-tRNA(Gln) amidotransferase subunit A (485 aa).

Active-site charge relay system residues include K79 and S154. The active-site Acyl-ester intermediate is the S178.

Belongs to the amidase family. GatA subfamily. Heterotrimer of A, B and C subunits.

The enzyme catalyses L-glutamyl-tRNA(Gln) + L-glutamine + ATP + H2O = L-glutaminyl-tRNA(Gln) + L-glutamate + ADP + phosphate + H(+). Allows the formation of correctly charged Gln-tRNA(Gln) through the transamidation of misacylated Glu-tRNA(Gln) in organisms which lack glutaminyl-tRNA synthetase. The reaction takes place in the presence of glutamine and ATP through an activated gamma-phospho-Glu-tRNA(Gln). In Clostridium novyi (strain NT), this protein is Glutamyl-tRNA(Gln) amidotransferase subunit A.